The primary structure comprises 586 residues: Ferredoxin--nitrite reductase, chloroplastic (586 aa).

Residues 1 to 18 (MTSFSLTFTSPLLPSSST) are compositionally biased toward low complexity. A disordered region spans residues 1 to 20 (MTSFSLTFTSPLLPSSSTKP). Residues 1 to 25 (MTSFSLTFTSPLLPSSSTKPKRSVL) constitute a chloroplast transit peptide. A Glycyl lysine isopeptide (Lys-Gly) (interchain with G-Cter in ubiquitin) cross-link involves residue lysine 103. Residues cysteine 464, cysteine 470, cysteine 505, and cysteine 509 each contribute to the [4Fe-4S] cluster site. Position 509 (cysteine 509) interacts with siroheme.

The protein belongs to the nitrite and sulfite reductase 4Fe-4S domain family. Monomer. Siroheme serves as cofactor. Requires [4Fe-4S] cluster as cofactor.

The protein resides in the plastid. It localises to the chloroplast. It catalyses the reaction 6 oxidized [2Fe-2S]-[ferredoxin] + NH4(+) + 2 H2O = nitrite + 6 reduced [2Fe-2S]-[ferredoxin] + 8 H(+). It functions in the pathway nitrogen metabolism; nitrate reduction (assimilation). Catalyzes the six-electron reduction of nitrite to ammonium. The chain is Ferredoxin--nitrite reductase, chloroplastic (NIR1) from Arabidopsis thaliana (Mouse-ear cress).